Consider the following 194-residue polypeptide: PRELI domain containing protein 3B (194 aa).

Positions 1-172 constitute a PRELI/MSF1 domain; it reads MKIWTSEHVF…VIHKLNAEIE (172 aa). Residues Ser-46 and Ser-51 each carry the phosphoserine modification.

The protein belongs to the slowmo family.

This Macaca fascicularis (Crab-eating macaque) protein is PRELI domain containing protein 3B (PRELID3B).